Consider the following 174-residue polypeptide: MVLLAASGFNLLKVNPGLVIWTLVTFSVVVFVLKKFAWDKILHALEERASGIQGDINKAESLRVEAEKSLKEYKDQLFKATEEAHRIVDEAKKDAVALRTKLTEEAHNEVKGIKDSAVREIELAKGRALSEIQNQIVEMSVLIASEILEKQLKKEDYASFVEKEIAKLDKLKIK.

A helical transmembrane segment spans residues 15-33; the sequence is NPGLVIWTLVTFSVVVFVL.

This sequence belongs to the ATPase B chain family. As to quaternary structure, F-type ATPases have 2 components, F(1) - the catalytic core - and F(0) - the membrane proton channel. F(1) has five subunits: alpha(3), beta(3), gamma(1), delta(1), epsilon(1). F(0) has three main subunits: a(1), b(2) and c(10-14). The alpha and beta chains form an alternating ring which encloses part of the gamma chain. F(1) is attached to F(0) by a central stalk formed by the gamma and epsilon chains, while a peripheral stalk is formed by the delta and b chains.

It is found in the cell inner membrane. F(1)F(0) ATP synthase produces ATP from ADP in the presence of a proton or sodium gradient. F-type ATPases consist of two structural domains, F(1) containing the extramembraneous catalytic core and F(0) containing the membrane proton channel, linked together by a central stalk and a peripheral stalk. During catalysis, ATP synthesis in the catalytic domain of F(1) is coupled via a rotary mechanism of the central stalk subunits to proton translocation. Functionally, component of the F(0) channel, it forms part of the peripheral stalk, linking F(1) to F(0). This Leptospira biflexa serovar Patoc (strain Patoc 1 / Ames) protein is ATP synthase subunit b.